Here is a 156-residue protein sequence, read N- to C-terminus: Arginine repressor (156 aa).

The protein belongs to the ArgR family.

It is found in the cytoplasm. The protein operates within amino-acid biosynthesis; L-arginine biosynthesis [regulation]. Functionally, regulates arginine biosynthesis genes. This Shewanella pealeana (strain ATCC 700345 / ANG-SQ1) protein is Arginine repressor.